A 336-amino-acid polypeptide reads, in one-letter code: Large ribosomal subunit protein uL3 (336 aa).

A disordered region spans residues 1–34 (MVRHHQPRKGSVAFSPRKRAAKETPRIKSWPQND).

The protein belongs to the universal ribosomal protein uL3 family. As to quaternary structure, part of the 50S ribosomal subunit. Forms a cluster with proteins L14 and L24e.

In terms of biological role, one of the primary rRNA binding proteins, it binds directly near the 3'-end of the 23S rRNA, where it nucleates assembly of the 50S subunit. The polypeptide is Large ribosomal subunit protein uL3 (Methanobrevibacter smithii (strain ATCC 35061 / DSM 861 / OCM 144 / PS)).